A 312-amino-acid polypeptide reads, in one-letter code: Malate dehydrogenase (312 aa).

NAD(+) is bound by residues 7–13 (GAAGGIG) and D34. 2 residues coordinate substrate: R81 and R87. NAD(+)-binding positions include N94 and 117–119 (ITN). Substrate is bound by residues N119 and R153. H177 (proton acceptor) is an active-site residue. Position 227 (M227) interacts with NAD(+).

The protein belongs to the LDH/MDH superfamily. MDH type 1 family. Homodimer.

It carries out the reaction (S)-malate + NAD(+) = oxaloacetate + NADH + H(+). Functionally, catalyzes the reversible oxidation of malate to oxaloacetate. The chain is Malate dehydrogenase from Cronobacter sakazakii (strain ATCC BAA-894) (Enterobacter sakazakii).